A 221-amino-acid polypeptide reads, in one-letter code: Uracil-DNA glycosylase 1 (221 aa).

Asp61 (proton acceptor) is an active-site residue.

The protein belongs to the uracil-DNA glycosylase (UDG) superfamily. UNG family.

Its subcellular location is the cytoplasm. It carries out the reaction Hydrolyzes single-stranded DNA or mismatched double-stranded DNA and polynucleotides, releasing free uracil.. Its function is as follows. Excises uracil residues from the DNA which can arise as a result of misincorporation of dUMP residues by DNA polymerase or due to deamination of cytosine. This is Uracil-DNA glycosylase 1 from Listeria innocua serovar 6a (strain ATCC BAA-680 / CLIP 11262).